The primary structure comprises 274 residues: Cytochrome b-c1 complex subunit Rieske, mitochondrial (274 aa).

At 79 to 103 (SHTDVRVPDFSEYRRLEVLDSTKSS) the chain is on the mitochondrial matrix side. The helical transmembrane segment at 104 to 140 (RESSEARKGFSYLVTGVTTVGVAYAAKNVVTQFVSSM) threads the bilayer. At 141-274 (SASADVLALA…FTSDDMVIVG (134 aa)) the chain is on the mitochondrial intermembrane side. The region spanning 187 to 272 (EAAVELSQLR…YEFTSDDMVI (86 aa)) is the Rieske domain. The [2Fe-2S] cluster site is built by Cys-217, His-219, Cys-236, His-239, and Ser-241. A disulfide bridge connects residues Cys-222 and Cys-238.

The protein belongs to the Rieske iron-sulfur protein family. As to quaternary structure, component of the ubiquinol-cytochrome c oxidoreductase (cytochrome b-c1 complex, complex III, CIII), a multisubunit enzyme composed of 11 subunits. The complex is composed of 3 respiratory subunits cytochrome b, cytochrome c1 and Rieske protein UQCRFS1, 2 core protein subunits UQCRC1/QCR1 and UQCRC2/QCR2, and 6 low-molecular weight protein subunits UQCRH/QCR6, UQCRB/QCR7, UQCRQ/QCR8, UQCR10/QCR9, UQCR11/QCR10 and subunit 9, the cleavage product of Rieske protein UQCRFS1. The complex exists as an obligatory dimer and forms supercomplexes (SCs) in the inner mitochondrial membrane with NADH-ubiquinone oxidoreductase (complex I, CI) and cytochrome c oxidase (complex IV, CIV), resulting in different assemblies (supercomplex SCI(1)III(2)IV(1) and megacomplex MCI(2)III(2)IV(2)). Incorporation of the Rieske protein UQCRFS1 is the penultimate step in complex III assembly. Interacts with TTC19, which is involved in the clearance of UQCRFS1 fragments. Component of the ubiquinol-cytochrome c oxidoreductase (cytochrome b-c1 complex, complex III, CIII). Subunit 9 corresponds to the mitochondrial targeting sequence (MTS) of Rieske protein UQCRFS1. It is retained after processing and incorporated inside complex III, where it remains bound to the complex and localizes between the 2 core subunits UQCRC1/QCR1 and UQCRC2/QCR2. [2Fe-2S] cluster serves as cofactor. In terms of processing, proteolytic processing is necessary for the correct insertion of UQCRFS1 in the complex III dimer. Several fragments are generated during UQCRFS1 insertion, most probably due to the endogenous matrix-processing peptidase (MPP) activity of the 2 core protein subunits UQCRC1/QCR1 and UQCRC2/QCR2, which are homologous to the 2 mitochondrial-processing peptidase (MPP) subunits beta-MPP and alpha-MPP respectively. The action of the protease is also necessary for the clearance of the UQCRFS1 fragments.

The protein resides in the mitochondrion inner membrane. It catalyses the reaction a quinol + 2 Fe(III)-[cytochrome c](out) = a quinone + 2 Fe(II)-[cytochrome c](out) + 2 H(+)(out). In terms of biological role, component of the ubiquinol-cytochrome c oxidoreductase, a multisubunit transmembrane complex that is part of the mitochondrial electron transport chain which drives oxidative phosphorylation. The respiratory chain contains 3 multisubunit complexes succinate dehydrogenase (complex II, CII), ubiquinol-cytochrome c oxidoreductase (cytochrome b-c1 complex, complex III, CIII) and cytochrome c oxidase (complex IV, CIV), that cooperate to transfer electrons derived from NADH and succinate to molecular oxygen, creating an electrochemical gradient over the inner membrane that drives transmembrane transport and the ATP synthase. The cytochrome b-c1 complex catalyzes electron transfer from ubiquinol to cytochrome c, linking this redox reaction to translocation of protons across the mitochondrial inner membrane, with protons being carried across the membrane as hydrogens on the quinol. In the process called Q cycle, 2 protons are consumed from the matrix, 4 protons are released into the intermembrane space and 2 electrons are passed to cytochrome c. The Rieske protein is a catalytic core subunit containing a [2Fe-2S] iron-sulfur cluster. It cycles between 2 conformational states during catalysis to transfer electrons from the quinol bound in the Q(0) site in cytochrome b to cytochrome c1. Incorporation of UQCRFS1 is the penultimate step in complex III assembly. Component of the ubiquinol-cytochrome c oxidoreductase (cytochrome b-c1 complex, complex III, CIII). UQCRFS1 undergoes proteolytic processing once it is incorporated in the complex III dimer. One of the fragments, called subunit 9, corresponds to its mitochondrial targeting sequence (MTS). The proteolytic processing is necessary for the correct insertion of UQCRFS1 in the complex III dimer, but the persistence of UQCRFS1-derived fragments may prevent newly imported UQCRFS1 to be processed and assembled into complex III and is detrimental for the complex III structure and function. The polypeptide is Cytochrome b-c1 complex subunit Rieske, mitochondrial (UQCRFS1) (Pongo pygmaeus (Bornean orangutan)).